Here is a 239-residue protein sequence, read N- to C-terminus: 7-cyano-7-deazaguanine synthase (239 aa).

ATP is bound at residue 8–18 (FSGGLDSTASL). Residues C194, C209, C212, and C215 each coordinate Zn(2+).

This sequence belongs to the QueC family.

It carries out the reaction 7-carboxy-7-deazaguanine + NH4(+) + ATP = 7-cyano-7-deazaguanine + ADP + phosphate + H2O + H(+). It participates in purine metabolism; 7-cyano-7-deazaguanine biosynthesis. Its function is as follows. Catalyzes the ATP-dependent conversion of 7-carboxy-7-deazaguanine (CDG) to 7-cyano-7-deazaguanine (preQ(0)). The polypeptide is 7-cyano-7-deazaguanine synthase (Pyrococcus abyssi (strain GE5 / Orsay)).